Reading from the N-terminus, the 419-residue chain is Protein transport protein sec9 (419 aa).

Residues 1–11 (MKKLFKKKKGV) show a composition bias toward basic residues. 3 disordered regions span residues 1–60 (MKKL…TYGS), 116–143 (ARKDMPPMKSSAAVTERPSMHRSAPSQD), and 156–186 (ARIQNDDESTTDTIPHNDDGTEGDEYGEGYR). Residues 21 to 32 (ESNSNTATNAPS) show a composition bias toward polar residues. The span at 36–60 (GGTTANSYSSNSYNDNNNSNSTYGS) shows a compositional bias: low complexity. Ser141 carries the post-translational modification Phosphoserine. T-SNARE coiled-coil homology domains lie at 203 to 265 (QFVK…AREL) and 356 to 418 (DAME…LRHI).

Belongs to the SNAP-25 family.

Has a role in cell separation, a final step of cytokinesis and in the assembly of the forespore membrane. May have a role in the transport of secretory proteins to these growing sites. The polypeptide is Protein transport protein sec9 (sec9) (Schizosaccharomyces pombe (strain 972 / ATCC 24843) (Fission yeast)).